The primary structure comprises 260 residues: Phosphate import ATP-binding protein PstB (260 aa).

Positions 13–255 constitute an ABC transporter domain; sequence MRAQGVNVFY…PKQERTKDYI (243 aa). An ATP-binding site is contributed by 45–52; it reads GPSGCGKS.

The protein belongs to the ABC transporter superfamily. Phosphate importer (TC 3.A.1.7) family. The complex is composed of two ATP-binding proteins (PstB), two transmembrane proteins (PstC and PstA) and a solute-binding protein (PstS).

It is found in the cell inner membrane. The catalysed reaction is phosphate(out) + ATP + H2O = ADP + 2 phosphate(in) + H(+). Functionally, part of the ABC transporter complex PstSACB involved in phosphate import. Responsible for energy coupling to the transport system. The sequence is that of Phosphate import ATP-binding protein PstB from Sphingopyxis alaskensis (strain DSM 13593 / LMG 18877 / RB2256) (Sphingomonas alaskensis).